The sequence spans 177 residues: NAD(P)H-quinone oxidoreductase subunit 6, chloroplastic (177 aa).

The next 5 membrane-spanning stretches (helical) occupy residues 10 to 30 (ILLV…VLLT), 32 to 52 (PIYS…FYIP), 61 to 81 (AQLL…VMFM), 92 to 112 (FWTI…FSLI), and 152 to 172 (FYLP…GAIA).

The protein belongs to the complex I subunit 6 family. NDH is composed of at least 16 different subunits, 5 of which are encoded in the nucleus.

It is found in the plastid. Its subcellular location is the chloroplast thylakoid membrane. It carries out the reaction a plastoquinone + NADH + (n+1) H(+)(in) = a plastoquinol + NAD(+) + n H(+)(out). The enzyme catalyses a plastoquinone + NADPH + (n+1) H(+)(in) = a plastoquinol + NADP(+) + n H(+)(out). Its function is as follows. NDH shuttles electrons from NAD(P)H:plastoquinone, via FMN and iron-sulfur (Fe-S) centers, to quinones in the photosynthetic chain and possibly in a chloroplast respiratory chain. The immediate electron acceptor for the enzyme in this species is believed to be plastoquinone. Couples the redox reaction to proton translocation, and thus conserves the redox energy in a proton gradient. In Nuphar advena (Common spatterdock), this protein is NAD(P)H-quinone oxidoreductase subunit 6, chloroplastic (ndhG).